Consider the following 379-residue polypeptide: All-trans-retinol dehydrogenase [NAD(+)] ADH4 (379 aa).

Thr-1 bears the N-acetylthreonine mark. Cys-46, His-68, Cys-98, Cys-101, Cys-104, Cys-112, and Cys-179 together coordinate Zn(2+). NAD(+) is bound by residues 204 to 209 (GLGGVG), Asp-228, Lys-233, 297 to 299 (VGV), and Arg-374.

This sequence belongs to the zinc-containing alcohol dehydrogenase family. Class-II subfamily. Homodimer. Zn(2+) is required as a cofactor.

It localises to the cytoplasm. It carries out the reaction all-trans-retinol + NAD(+) = all-trans-retinal + NADH + H(+). It catalyses the reaction 9-cis-retinol + NAD(+) = 9-cis-retinal + NADH + H(+). The catalysed reaction is 20-oxo-(5Z,8Z,11Z,14Z)-eicosatetraenoate + NAD(+) + H2O = (5Z,8Z,11Z,14Z)-eicosatetraenedioate + NADH + 2 H(+). The enzyme catalyses 20-hydroxy-(5Z,8Z,11Z,14Z)-eicosatetraenoate + NAD(+) = 20-oxo-(5Z,8Z,11Z,14Z)-eicosatetraenoate + NADH + H(+). It carries out the reaction 1,4-benzoquinone + NADH + H(+) = hydroquinone + NAD(+). With respect to regulation, oxidation of 20-HETE is inhibited by low concentrations of N-heptylformamide. Oxidation of 20-HETE is a decreased by 55-65% by either all-trans-retinol or all-trans-retinoic acid. Strongly inhibited by omega-hydroxy fatty acids. Functionally, catalyzes the NAD-dependent oxidation of either all-trans-retinol or 9-cis-retinol. Also oxidizes long chain omega-hydroxy fatty acids, such as 20-HETE, producing both the intermediate aldehyde, 20-oxoarachidonate and the end product, a dicarboxylic acid, (5Z,8Z,11Z,14Z)-eicosatetraenedioate. Also catalyzes the reduction of benzoquinones. This chain is All-trans-retinol dehydrogenase [NAD(+)] ADH4, found in Struthio camelus (Common ostrich).